A 44-amino-acid chain; its full sequence is MKSKLFISLSAVLIGLAFFGSMYNGEMKEASRNVTLAPTHEFLV.

Propeptides lie at residues 1-30 (MKSK…MKEA) and 36-44 (LAPTHEFLV).

Belongs to the Phr family. Contains a predicted signal peptide cleavage site in the N-terminal region, however the propeptide is probably only subject to processing events at the ends of the mature peptide.

It is found in the secreted. The protein localises to the cytoplasm. In terms of biological role, signaling molecule involved in the regulation of sporulation. Secreted during production, but the mature peptide acts intracellularly, indicating that it needs to be imported into the cell to function. Inhibitor of the RapE phosphatase activity. Does not inhibit the phosphatase activity of RapA and RapB. Probably plays a dispensable role in the overall context of sporulation initiation. The polypeptide is Phosphatase RapE inhibitor (phrE) (Bacillus subtilis (strain 168)).